Consider the following 248-residue polypeptide: Type III pantothenate kinase (248 aa).

ATP is bound at residue 6-13 (DCGNSFIK). Residues Tyr92 and 99 to 102 (GLDR) contribute to the substrate site. The active-site Proton acceptor is the Asp101. Asp121 contributes to the K(+) binding site. Thr124 is a binding site for ATP. Position 180 (Thr180) interacts with substrate.

The protein belongs to the type III pantothenate kinase family. Homodimer. Requires NH4(+) as cofactor. K(+) is required as a cofactor.

It localises to the cytoplasm. The enzyme catalyses (R)-pantothenate + ATP = (R)-4'-phosphopantothenate + ADP + H(+). It participates in cofactor biosynthesis; coenzyme A biosynthesis; CoA from (R)-pantothenate: step 1/5. In terms of biological role, catalyzes the phosphorylation of pantothenate (Pan), the first step in CoA biosynthesis. This is Type III pantothenate kinase from Ectopseudomonas mendocina (strain ymp) (Pseudomonas mendocina).